Reading from the N-terminus, the 196-residue chain is Putative 3-methyladenine DNA glycosylase (196 aa).

The protein belongs to the DNA glycosylase MPG family.

This is Putative 3-methyladenine DNA glycosylase from Bacillus velezensis (strain DSM 23117 / BGSC 10A6 / LMG 26770 / FZB42) (Bacillus amyloliquefaciens subsp. plantarum).